A 247-amino-acid chain; its full sequence is Calpain small subunit 2 (247 aa).

Positions 88, 91, 93, 131, 133, 135, 137, 142, 161, 163, 165, and 204 each coordinate Ca(2+). EF-hand domains lie at 118–151, 148–183, 184–212, and 213–247; these read FSLD…NNIK, NNIK…AGFQ, LNEQ…ISCL, and VRLD…TMYS.

In terms of assembly, heterodimer of a large (catalytic) and a small (regulatory) subunit.

It localises to the cytoplasm. It is found in the cell membrane. In terms of biological role, calcium-regulated non-lysosomal thiol-protease which catalyzes limited proteolysis of substrates involved in cytoskeletal remodeling and signal transduction. This small subunit may act as a tissue-specific chaperone of the large subunit, possibly by helping it fold into its correct conformation for activity. The sequence is that of Calpain small subunit 2 (Capns2) from Mus musculus (Mouse).